Consider the following 353-residue polypeptide: Photosystem II protein D1 (353 aa).

Residue threonine 2 is modified to N-acetylthreonine. Threonine 2 carries the phosphothreonine modification. Transmembrane regions (helical) follow at residues 29–46 (YIGW…TATS), 118–133 (HFLL…EWEL), and 142–156 (WIAV…AATA). A chlorophyll a-binding site is contributed by histidine 118. Tyrosine 126 serves as a coordination point for pheophytin a. Positions 170 and 189 each coordinate [CaMn4O5] cluster. Residues 197–218 (FHMLGVAGVFGGSLFSAMHGSL) form a helical membrane-spanning segment. Residue histidine 198 participates in chlorophyll a binding. Residues histidine 215 and 264-265 (SF) each bind a quinone. Fe cation is bound at residue histidine 215. A Fe cation-binding site is contributed by histidine 272. Residues 274 to 288 (FLAAWPVVGIWFTAL) form a helical membrane-spanning segment. Histidine 332, glutamate 333, aspartate 342, and alanine 344 together coordinate [CaMn4O5] cluster. Residues 345-353 (AIDAPSING) constitute a propeptide that is removed on maturation.

Belongs to the reaction center PufL/M/PsbA/D family. In terms of assembly, PSII is composed of 1 copy each of membrane proteins PsbA, PsbB, PsbC, PsbD, PsbE, PsbF, PsbH, PsbI, PsbJ, PsbK, PsbL, PsbM, PsbT, PsbX, PsbY, PsbZ, Psb30/Ycf12, at least 3 peripheral proteins of the oxygen-evolving complex and a large number of cofactors. It forms dimeric complexes. Requires The D1/D2 heterodimer binds P680, chlorophylls that are the primary electron donor of PSII, and subsequent electron acceptors. It shares a non-heme iron and each subunit binds pheophytin, quinone, additional chlorophylls, carotenoids and lipids. D1 provides most of the ligands for the Mn4-Ca-O5 cluster of the oxygen-evolving complex (OEC). There is also a Cl(-1) ion associated with D1 and D2, which is required for oxygen evolution. The PSII complex binds additional chlorophylls, carotenoids and specific lipids. as cofactor. Tyr-161 forms a radical intermediate that is referred to as redox-active TyrZ, YZ or Y-Z. Post-translationally, C-terminally processed by CTPA; processing is essential to allow assembly of the oxygen-evolving complex and thus photosynthetic growth.

The protein localises to the plastid. The protein resides in the chloroplast thylakoid membrane. The catalysed reaction is 2 a plastoquinone + 4 hnu + 2 H2O = 2 a plastoquinol + O2. Functionally, photosystem II (PSII) is a light-driven water:plastoquinone oxidoreductase that uses light energy to abstract electrons from H(2)O, generating O(2) and a proton gradient subsequently used for ATP formation. It consists of a core antenna complex that captures photons, and an electron transfer chain that converts photonic excitation into a charge separation. The D1/D2 (PsbA/PsbD) reaction center heterodimer binds P680, the primary electron donor of PSII as well as several subsequent electron acceptors. The sequence is that of Photosystem II protein D1 from Glycine max (Soybean).